We begin with the raw amino-acid sequence, 400 residues long: Deoxyguanosinetriphosphate triphosphohydrolase-like protein (400 aa).

Residues 73 to 215 (RLTHSIEVSQ…AAIADDIAYN (143 aa)) enclose the HD domain.

It belongs to the dGTPase family. Type 2 subfamily.

The chain is Deoxyguanosinetriphosphate triphosphohydrolase-like protein from Bartonella quintana (strain Toulouse) (Rochalimaea quintana).